The following is a 274-amino-acid chain: Orotidine 5'-phosphate decarboxylase (274 aa).

Lys-95 acts as the Proton donor in catalysis.

It belongs to the OMP decarboxylase family. Type 2 subfamily.

The catalysed reaction is orotidine 5'-phosphate + H(+) = UMP + CO2. It functions in the pathway pyrimidine metabolism; UMP biosynthesis via de novo pathway; UMP from orotate: step 2/2. In Verminephrobacter eiseniae (strain EF01-2), this protein is Orotidine 5'-phosphate decarboxylase.